The chain runs to 150 residues: MTIADNKKAFFDYFIEERFEAGIVLEGWEVKAIRAGRVQIKEGYVVVRDAEMFLIGAHISPLQSASTHVNPDPVRTRKLLLKADEIKKLIGKVEQRGYTLVPLNLHYTRGRVKCEIGLGKGKKLFDKRETEKQRDWQREKSRIMKGGSKE.

A disordered region spans residues 129-150 (ETEKQRDWQREKSRIMKGGSKE).

The protein belongs to the SmpB family.

The protein resides in the cytoplasm. Its function is as follows. Required for rescue of stalled ribosomes mediated by trans-translation. Binds to transfer-messenger RNA (tmRNA), required for stable association of tmRNA with ribosomes. tmRNA and SmpB together mimic tRNA shape, replacing the anticodon stem-loop with SmpB. tmRNA is encoded by the ssrA gene; the 2 termini fold to resemble tRNA(Ala) and it encodes a 'tag peptide', a short internal open reading frame. During trans-translation Ala-aminoacylated tmRNA acts like a tRNA, entering the A-site of stalled ribosomes, displacing the stalled mRNA. The ribosome then switches to translate the ORF on the tmRNA; the nascent peptide is terminated with the 'tag peptide' encoded by the tmRNA and targeted for degradation. The ribosome is freed to recommence translation, which seems to be the essential function of trans-translation. In Cupriavidus pinatubonensis (strain JMP 134 / LMG 1197) (Cupriavidus necator (strain JMP 134)), this protein is SsrA-binding protein.